We begin with the raw amino-acid sequence, 577 residues long: Dihydroxy-acid dehydratase (577 aa).

A compositionally biased stretch (basic and acidic residues) spans 1-10; it reads MLKRSFDKSK. Residues 1 to 22 form a disordered region; sequence MLKRSFDKSKLPSRHVTEGPSR. Position 56 (C56) interacts with [2Fe-2S] cluster. D88 provides a ligand contact to Mg(2+). Position 129 (C129) interacts with [2Fe-2S] cluster. 2 residues coordinate Mg(2+): D130 and K131. Residue K131 is modified to N6-carboxylysine. C201 provides a ligand contact to [2Fe-2S] cluster. Position 453 (E453) interacts with Mg(2+). Catalysis depends on S479, which acts as the Proton acceptor.

This sequence belongs to the IlvD/Edd family. Homodimer. It depends on [2Fe-2S] cluster as a cofactor. Mg(2+) is required as a cofactor.

It carries out the reaction (2R)-2,3-dihydroxy-3-methylbutanoate = 3-methyl-2-oxobutanoate + H2O. The catalysed reaction is (2R,3R)-2,3-dihydroxy-3-methylpentanoate = (S)-3-methyl-2-oxopentanoate + H2O. Its pathway is amino-acid biosynthesis; L-isoleucine biosynthesis; L-isoleucine from 2-oxobutanoate: step 3/4. It functions in the pathway amino-acid biosynthesis; L-valine biosynthesis; L-valine from pyruvate: step 3/4. Its function is as follows. Functions in the biosynthesis of branched-chain amino acids. Catalyzes the dehydration of (2R,3R)-2,3-dihydroxy-3-methylpentanoate (2,3-dihydroxy-3-methylvalerate) into 2-oxo-3-methylpentanoate (2-oxo-3-methylvalerate) and of (2R)-2,3-dihydroxy-3-methylbutanoate (2,3-dihydroxyisovalerate) into 2-oxo-3-methylbutanoate (2-oxoisovalerate), the penultimate precursor to L-isoleucine and L-valine, respectively. The protein is Dihydroxy-acid dehydratase of Dinoroseobacter shibae (strain DSM 16493 / NCIMB 14021 / DFL 12).